The following is a 198-amino-acid chain: Recombination protein RecR (198 aa).

A C4-type zinc finger spans residues 57–72; that stretch reads CSECQTLTDKDPCAVC. One can recognise a Toprim domain in the interval 80 to 175; the sequence is RIICVVEGVP…KVTRIAQGIP (96 aa).

Belongs to the RecR family.

Its function is as follows. May play a role in DNA repair. It seems to be involved in an RecBC-independent recombinational process of DNA repair. It may act with RecF and RecO. The chain is Recombination protein RecR from Anaeromyxobacter sp. (strain Fw109-5).